The sequence spans 309 residues: Oxygen-dependent coproporphyrinogen-III oxidase (309 aa).

A substrate-binding site is contributed by S94. Residues H98 and H108 each coordinate a divalent metal cation. H108 acts as the Proton donor in catalysis. Residue 110-112 coordinates substrate; it reads NVR. A divalent metal cation contacts are provided by H147 and H177. The tract at residues 242-277 is important for dimerization; the sequence is YVEFNLVWDRGTLFGLQTGGRTESILMSLPPLVRWE. 260 to 262 is a substrate binding site; the sequence is GGR.

It belongs to the aerobic coproporphyrinogen-III oxidase family. As to quaternary structure, homodimer. The cofactor is a divalent metal cation.

It localises to the cytoplasm. It catalyses the reaction coproporphyrinogen III + O2 + 2 H(+) = protoporphyrinogen IX + 2 CO2 + 2 H2O. It functions in the pathway porphyrin-containing compound metabolism; protoporphyrin-IX biosynthesis; protoporphyrinogen-IX from coproporphyrinogen-III (O2 route): step 1/1. Its function is as follows. Involved in the heme biosynthesis. Catalyzes the aerobic oxidative decarboxylation of propionate groups of rings A and B of coproporphyrinogen-III to yield the vinyl groups in protoporphyrinogen-IX. This chain is Oxygen-dependent coproporphyrinogen-III oxidase, found in Yersinia pestis bv. Antiqua (strain Antiqua).